The sequence spans 248 residues: 5'-nucleotidase SurE (248 aa).

The a divalent metal cation site is built by D8, D9, S39, and N91.

Belongs to the SurE nucleotidase family. It depends on a divalent metal cation as a cofactor.

It is found in the cytoplasm. It catalyses the reaction a ribonucleoside 5'-phosphate + H2O = a ribonucleoside + phosphate. Functionally, nucleotidase that shows phosphatase activity on nucleoside 5'-monophosphates. The polypeptide is 5'-nucleotidase SurE (Geotalea daltonii (strain DSM 22248 / JCM 15807 / FRC-32) (Geobacter daltonii)).